The sequence spans 490 residues: Betaine aldehyde dehydrogenase (490 aa).

Asp-93 contributes to the K(+) binding site. 150-152 lines the NAD(+) pocket; it reads GAW. Residue Lys-162 is the Charge relay system of the active site. 176-179 provides a ligand contact to NAD(+); that stretch reads KPSE. Val-180 lines the K(+) pocket. 230–233 lines the NAD(+) pocket; sequence GIAS. Leu-246 contributes to the K(+) binding site. Glu-252 functions as the Proton acceptor in the catalytic mechanism. Gly-254, Cys-286, and Glu-387 together coordinate NAD(+). Residue Cys-286 is the Nucleophile of the active site. Cys-286 is modified (cysteine sulfenic acid (-SOH)). Positions 457 and 460 each coordinate K(+). Catalysis depends on Glu-464, which acts as the Charge relay system.

Belongs to the aldehyde dehydrogenase family. Dimer of dimers. The cofactor is K(+).

It carries out the reaction betaine aldehyde + NAD(+) + H2O = glycine betaine + NADH + 2 H(+). The protein operates within amine and polyamine biosynthesis; betaine biosynthesis via choline pathway; betaine from betaine aldehyde: step 1/1. In terms of biological role, involved in the biosynthesis of the osmoprotectant glycine betaine. Catalyzes the irreversible oxidation of betaine aldehyde to the corresponding acid. This Yersinia pseudotuberculosis serotype O:3 (strain YPIII) protein is Betaine aldehyde dehydrogenase.